A 43-amino-acid polypeptide reads, in one-letter code: DeltaKappa-actitoxin-Avd4b (43 aa).

3 disulfides stabilise this stretch: Cys-4–Cys-39, Cys-6–Cys-32, and Cys-22–Cys-40.

This sequence belongs to the sea anemone type 3 (BDS) potassium channel toxin family.

The protein localises to the secreted. Its subcellular location is the nematocyst. Acts as a gating modifier on both Kv and Nav ion channels. Voltage-dependently inhibits voltage-gated potassium channels Kv3 (Kv3.1/KCNC1, Kv3.2/KCNC2 and Kv3.4/KCNC4). Slows inactivation of the voltage-gated sodium channel Nav1.7/SCN9A. Inhibits all Kv3.1, Kv3.2 and Kv3.4 by about 50% when tested at a voltage of +40 mV. May act by binding residues in voltage-sensing domains S3b and S4 of Kv3. Tests have been done on human Nav1.7/SCN9A and rat SCG neurons that mostly carry Nav1.7 channels (EC(50)=300 nM). This toxin also reduces blood pressure. This Anemonia sulcata (Mediterranean snakelocks sea anemone) protein is DeltaKappa-actitoxin-Avd4b.